A 132-amino-acid polypeptide reads, in one-letter code: Small ribosomal subunit protein uS8 (132 aa).

This sequence belongs to the universal ribosomal protein uS8 family. As to quaternary structure, part of the 30S ribosomal subunit. Contacts proteins S5 and S12.

In terms of biological role, one of the primary rRNA binding proteins, it binds directly to 16S rRNA central domain where it helps coordinate assembly of the platform of the 30S subunit. This chain is Small ribosomal subunit protein uS8, found in Sinorhizobium fredii (strain NBRC 101917 / NGR234).